We begin with the raw amino-acid sequence, 505 residues long: DNA primase DnaG (505 aa).

The Toprim domain occupies 167–241; that stretch reads DAVIVVEGRA…DVDYVAFAPP (75 aa). Residues Glu-173, Asp-215, and Asp-217 each coordinate Mg(2+). The tract at residues 268–410 is disordered; the sequence is DEPNLREAAT…PLDNEPRSIE (143 aa). Residues 318 to 327 show a composition bias toward low complexity; it reads AGVVAGGARS. Acidic residues-rich tracts occupy residues 349-376 and 384-402; these read GEVDEVGEDREGDMESDSDTADINDAEF and PNLDEAADAESVEETDAPL.

Belongs to the archaeal DnaG primase family. Forms a ternary complex with MCM helicase and DNA. It depends on Mg(2+) as a cofactor.

The enzyme catalyses ssDNA + n NTP = ssDNA/pppN(pN)n-1 hybrid + (n-1) diphosphate.. Its function is as follows. RNA polymerase that catalyzes the synthesis of short RNA molecules used as primers for DNA polymerase during DNA replication. This Halorubrum lacusprofundi (strain ATCC 49239 / DSM 5036 / JCM 8891 / ACAM 34) protein is DNA primase DnaG.